Consider the following 249-residue polypeptide: Isoamyl acetate-hydrolyzing esterase 1 homolog (249 aa).

Residue Ser-24 is the Nucleophile of the active site. N6-succinyllysine is present on Lys-63. Asp-197 acts as the Proton donor in catalysis. The active-site Proton acceptor is the His-200.

This sequence belongs to the 'GDSL' lipolytic enzyme family. IAH1 subfamily.

Functionally, probable lipase. The chain is Isoamyl acetate-hydrolyzing esterase 1 homolog (Iah1) from Rattus norvegicus (Rat).